Here is a 476-residue protein sequence, read N- to C-terminus: Protein DETOXIFICATION 1 (476 aa).

The next 12 membrane-spanning stretches (helical) occupy residues 35–55 (AAPM…SVMV), 66–86 (GVAL…CGLV), 117–137 (IPIC…LISL), 146–166 (IAGS…IVIP), 184–204 (AVTT…LFGL), 208–228 (GPAM…SCYV), 260–280 (AAMI…SGLL), 289–309 (VLSI…GVAA), 331–351 (VLAG…LLFT), 370–390 (VADL…TAVL), 402–422 (IGAW…GIYL), and 433–453 (LWCG…IVTA).

Belongs to the multi antimicrobial extrusion (MATE) (TC 2.A.66.1) family. In terms of tissue distribution, ubiquitous. Highest expression in flowers and stems.

It is found in the cell membrane. In terms of biological role, efflux carrier for plant-derived alkaloids, antibiotics, heavy metal and other toxic compounds. Involved in cadmium detoxification. Requires probably a proton-motive force for the efflux. The chain is Protein DETOXIFICATION 1 from Arabidopsis thaliana (Mouse-ear cress).